The sequence spans 122 residues: UPF0102 protein Ping_1176 (122 aa).

Belongs to the UPF0102 family.

This Psychromonas ingrahamii (strain DSM 17664 / CCUG 51855 / 37) protein is UPF0102 protein Ping_1176.